The primary structure comprises 773 residues: C-Maf-inducing protein (773 aa).

Residues 1–28 (MDVTSSSGGGDPRQIEETKPLLGSDVSG) are disordered. Positions 54-163 (LLQEGDIQVC…HSLQWKKKIY (110 aa)) constitute a PH domain. Phosphoserine occurs at positions 349, 377, 382, and 660. LRR repeat units lie at residues 663 to 686 (NLEN…IKLP), 687 to 707 (SLKQ…RLLS), 712 to 732 (MLQV…LALS), and 736 to 756 (SLCS…EDLK).

In terms of assembly, interacts with FLNA.

It is found in the nucleus. The protein localises to the cytoplasm. Plays a role in T-cell signaling pathway. This is C-Maf-inducing protein (Cmip) from Mus musculus (Mouse).